We begin with the raw amino-acid sequence, 118 residues long: T cell receptor gamma variable 5 (118 aa).

The first 17 residues, 1–17 (MRWALLVLLAFLSPASQ), serve as a signal peptide directing secretion. One can recognise an Ig-like domain in the interval 18–118 (KSSNLEGGTK…GVYYCATWDR (101 aa)). A disulfide bridge links Cys41 with Cys113. Residue Asn106 is glycosylated (N-linked (GlcNAc...) asparagine).

Gamma-delta TR is a heterodimer composed of a gamma and delta chain; disulfide-linked. The gamma-delta TR is associated with the transmembrane signaling CD3 coreceptor proteins following the stoichiometry: a single gamma-delta TR heterodimer associates with one CD3D-CD3E heterodimer, one CD3G-CD3E heterodimer and one CD247 homodimer forming a stable octameric structure. Upon activation, gamma-delta TR complex associates with FCER1G to initiate intracellular signaling.

Its subcellular location is the cell membrane. In terms of biological role, v region of the variable domain of T cell receptor (TR) gamma chain that participates in the antigen recognition. Gamma-delta TRs recognize a variety of self and foreign non-peptide antigens frequently expressed at the epithelial boundaries between the host and external environment, including endogenous lipids presented by MH-like protein CD1D and phosphoantigens presented by butyrophilin-like molecule BTN3A1. Upon antigen recognition induces rapid, innate-like immune responses involved in pathogen clearance and tissue repair. Binding of gamma-delta TR complex to antigen triggers phosphorylation of immunoreceptor tyrosine-based activation motifs (ITAMs) in the CD3 chains by the LCK and FYN kinases, allowing the recruitment, phosphorylation, and activation of ZAP70 that facilitates phosphorylation of the scaffolding proteins LCP2 and LAT. This lead to the formation of a supramolecular signalosome that recruits the phospholipase PLCG1, resulting in calcium mobilization and ERK activation, ultimately leading to T cell expansion and differentiation into effector cells. Gamma-delta TRs are produced through somatic rearrangement of a limited repertoire of variable (V), diversity (D), and joining (J) genes. The potential diversity of gamma-delta TRs is conferred by the unique ability to rearrange (D) genes in tandem and to utilize all three reading frames. The combinatorial diversity is considerably increased by the sequence exonuclease trimming and random nucleotide (N) region additions which occur during the V-(D)-J rearrangements. This Homo sapiens (Human) protein is T cell receptor gamma variable 5.